A 371-amino-acid chain; its full sequence is Glutamate 5-kinase (371 aa).

Lys-11 contacts ATP. Residues Ser-52, Asp-139, and Asn-151 each coordinate substrate. ATP is bound by residues 171 to 172 (TD) and 213 to 219 (TGGMATK). Residues 278–356 (EGSLTLDEGA…AEIPYILGYE (79 aa)) form the PUA domain.

It belongs to the glutamate 5-kinase family.

It localises to the cytoplasm. It carries out the reaction L-glutamate + ATP = L-glutamyl 5-phosphate + ADP. The protein operates within amino-acid biosynthesis; L-proline biosynthesis; L-glutamate 5-semialdehyde from L-glutamate: step 1/2. Its function is as follows. Catalyzes the transfer of a phosphate group to glutamate to form L-glutamate 5-phosphate. In Synechococcus sp. (strain JA-3-3Ab) (Cyanobacteria bacterium Yellowstone A-Prime), this protein is Glutamate 5-kinase.